The chain runs to 416 residues: Adrenocortical dysplasia protein (416 aa).

The PWI motif lies at 11-13 (PWI). Serine 25 is modified (phosphoserine). An interaction with POT1 region spans residues 156-245 (ESASSSAGLT…SSTGSSQKAR (90 aa)). Residues 234-251 (ILSSTGSSQKARGTSASP) show a composition bias toward polar residues. A disordered region spans residues 234–306 (ILSSTGSSQK…TSPPCNSTPS (73 aa)). Positions 259 to 272 (SGASVSLLSALATS) are enriched in low complexity. The span at 273-292 (DPGQMDSSQSPPAVGSTSPR) shows a compositional bias: polar residues. Phosphoserine occurs at positions 313 and 317. Lysine 345 participates in a covalent cross-link: Glycyl lysine isopeptide (Lys-Gly) (interchain with G-Cter in SUMO2).

As to quaternary structure, component of the shelterin complex (telosome) composed of TERF1, TERF2, TINF2, TERF2IP ACD and POT1. Forms heterodimers with POT1. Identified in a complex with POT1 and single-stranded telomeric DNA. Interacts with STN1 and TINF2. In terms of tissue distribution, ubiquitous.

It is found in the nucleus. The protein resides in the chromosome. The protein localises to the telomere. In terms of biological role, component of the shelterin complex (telosome) that is involved in the regulation of telomere length and protection. Shelterin associates with arrays of double-stranded TTAGGG repeats added by telomerase and protects chromosome ends. Without its protective activity, telomeres are no longer hidden from the DNA damage surveillance and chromosome ends are inappropriately processed by DNA repair pathways. Promotes binding of POT1 to single-stranded telomeric DNA. Modulates the inhibitory effects of POT1 on telomere elongation. The ACD-POT1 heterodimer enhances telomere elongation by recruiting telomerase to telomeres and increasing its processivity. May play a role in organogenesis. This Mus musculus (Mouse) protein is Adrenocortical dysplasia protein.